Reading from the N-terminus, the 230-residue chain is TPR repeat-containing protein BB_0298 (230 aa).

TPR repeat units lie at residues A69–N102 and F183–E216.

In Borreliella burgdorferi (strain ATCC 35210 / DSM 4680 / CIP 102532 / B31) (Borrelia burgdorferi), this protein is TPR repeat-containing protein BB_0298.